The following is a 209-amino-acid chain: Large ribosomal subunit protein bL25 (209 aa).

The disordered stretch occupies residues 190-209 (PDASAAPVAAPAAPAKKGKK).

The protein belongs to the bacterial ribosomal protein bL25 family. CTC subfamily. As to quaternary structure, part of the 50S ribosomal subunit; part of the 5S rRNA/L5/L18/L25 subcomplex. Contacts the 5S rRNA. Binds to the 5S rRNA independently of L5 and L18.

This is one of the proteins that binds to the 5S RNA in the ribosome where it forms part of the central protuberance. The chain is Large ribosomal subunit protein bL25 from Delftia acidovorans (strain DSM 14801 / SPH-1).